The sequence spans 487 residues: Probable Xaa-Pro aminopeptidase AFUB_014460 (487 aa).

The Mn(2+) site is built by Asp-267, Asp-278, Glu-416, and Glu-455.

It belongs to the peptidase M24B family. The cofactor is Mn(2+).

The enzyme catalyses Release of any N-terminal amino acid, including proline, that is linked to proline, even from a dipeptide or tripeptide.. Its function is as follows. Catalyzes the removal of a penultimate prolyl residue from the N-termini of peptides. The protein is Probable Xaa-Pro aminopeptidase AFUB_014460 of Aspergillus fumigatus (strain CBS 144.89 / FGSC A1163 / CEA10) (Neosartorya fumigata).